The sequence spans 80 residues: Small ribosomal subunit protein bS18 (80 aa).

Belongs to the bacterial ribosomal protein bS18 family. Part of the 30S ribosomal subunit. Forms a tight heterodimer with protein bS6.

Its function is as follows. Binds as a heterodimer with protein bS6 to the central domain of the 16S rRNA, where it helps stabilize the platform of the 30S subunit. This is Small ribosomal subunit protein bS18 from Clostridium perfringens (strain ATCC 13124 / DSM 756 / JCM 1290 / NCIMB 6125 / NCTC 8237 / Type A).